Here is a 370-residue protein sequence, read N- to C-terminus: Proline-rich protein 5-like (370 aa).

The residue at position 28 (serine 28) is a Phosphoserine. The disordered stretch occupies residues 327–370; sequence PTFPPPHRQCSSEPSILDSPDEMELEDVASGSQEDSELNCASLS.

It belongs to the PROTOR family. In terms of assembly, interacts with the mammalian target of rapamycin complex 2 (mTORC2) which contains MTOR, MLST8, PRR5, RICTOR, MAPKAP1 and DEPTOR. Interacts with RFFL. Interacts (via C-terminus) with ZFP36 (via C-terminus); this interaction may accelerate ZFP36-mediated mRNA decay during stress. Interacts with RICTOR. Post-translationally, ubiquitinated. Ubiquitination by RFFL promotes proteasomal degradation of PRR5L thereby modifying the substrate-specific activity of the mTORC2 complex. Ubiquitination by RFFL is stimulated by LPA/lysophosphatidic acid.

Its function is as follows. Associates with the mTORC2 complex that regulates cellular processes including survival and organization of the cytoskeleton. Regulates the activity of the mTORC2 complex in a substrate-specific manner preventing for instance the specific phosphorylation of PKCs and thereby controlling cell migration. Plays a role in the stimulation of ZFP36-mediated mRNA decay of several ZFP36-associated mRNAs, such as TNF-alpha and GM-CSF, in response to stress. Required for ZFP36 localization to cytoplasmic stress granule (SG) and P-body (PB) in response to stress. The protein is Proline-rich protein 5-like (Prr5l) of Rattus norvegicus (Rat).